We begin with the raw amino-acid sequence, 143 residues long: Large-conductance mechanosensitive channel (143 aa).

2 consecutive transmembrane segments (helical) span residues 16–36 and 84–104; these read VIDL…VTAL and INTV…VKLI.

It belongs to the MscL family. As to quaternary structure, homopentamer.

The protein localises to the cell inner membrane. In terms of biological role, channel that opens in response to stretch forces in the membrane lipid bilayer. May participate in the regulation of osmotic pressure changes within the cell. The sequence is that of Large-conductance mechanosensitive channel from Xanthomonas axonopodis pv. citri (strain 306).